The sequence spans 227 residues: Uridylate kinase (227 aa).

6 to 10 (KVSGK) contacts ATP. A UMP-binding site is contributed by Gly43. ATP-binding residues include Gly44 and Arg48. Residues Asp65 and 113–119 (FQPGQST) contribute to the UMP site. Thr139, Asn140, Tyr145, and Asp148 together coordinate ATP.

This sequence belongs to the UMP kinase family. As to quaternary structure, homohexamer.

The protein resides in the cytoplasm. It catalyses the reaction UMP + ATP = UDP + ADP. Its pathway is pyrimidine metabolism; CTP biosynthesis via de novo pathway; UDP from UMP (UMPK route): step 1/1. Inhibited by UTP. Catalyzes the reversible phosphorylation of UMP to UDP. The polypeptide is Uridylate kinase (Sulfolobus acidocaldarius (strain ATCC 33909 / DSM 639 / JCM 8929 / NBRC 15157 / NCIMB 11770)).